The sequence spans 166 residues: Cyclic pyranopterin monophosphate synthase (166 aa).

Substrate contacts are provided by residues 75–77 (MCH) and 115–116 (ME). The active site involves Asp130.

It belongs to the MoaC family. Homohexamer; trimer of dimers.

It carries out the reaction (8S)-3',8-cyclo-7,8-dihydroguanosine 5'-triphosphate = cyclic pyranopterin phosphate + diphosphate. It participates in cofactor biosynthesis; molybdopterin biosynthesis. Catalyzes the conversion of (8S)-3',8-cyclo-7,8-dihydroguanosine 5'-triphosphate to cyclic pyranopterin monophosphate (cPMP). The polypeptide is Cyclic pyranopterin monophosphate synthase (Shouchella clausii (strain KSM-K16) (Alkalihalobacillus clausii)).